A 154-amino-acid polypeptide reads, in one-letter code: Low molecular weight protein-tyrosine-phosphatase PtpA (154 aa).

Cys8 serves as the catalytic Nucleophile. Residue Arg14 is part of the active site. Residue Asp120 is the Proton donor of the active site.

The protein belongs to the low molecular weight phosphotyrosine protein phosphatase family.

The enzyme catalyses O-phospho-L-tyrosyl-[protein] + H2O = L-tyrosyl-[protein] + phosphate. Dephosphorylates the phosphotyrosine-containing proteins. The chain is Low molecular weight protein-tyrosine-phosphatase PtpA (ptpA) from Staphylococcus saprophyticus subsp. saprophyticus (strain ATCC 15305 / DSM 20229 / NCIMB 8711 / NCTC 7292 / S-41).